The following is a 209-amino-acid chain: Uracil phosphoribosyltransferase (209 aa).

5-phospho-alpha-D-ribose 1-diphosphate is bound by residues Arg79, Arg104, and 131-139; that span reads DPMLATGGS. Uracil-binding positions include Ile194 and 199–201; that span reads GDA. Residue Asp200 participates in 5-phospho-alpha-D-ribose 1-diphosphate binding.

It belongs to the UPRTase family. It depends on Mg(2+) as a cofactor.

The catalysed reaction is UMP + diphosphate = 5-phospho-alpha-D-ribose 1-diphosphate + uracil. The protein operates within pyrimidine metabolism; UMP biosynthesis via salvage pathway; UMP from uracil: step 1/1. Its activity is regulated as follows. Allosterically activated by GTP. Catalyzes the conversion of uracil and 5-phospho-alpha-D-ribose 1-diphosphate (PRPP) to UMP and diphosphate. The protein is Uracil phosphoribosyltransferase of Streptococcus mutans serotype c (strain ATCC 700610 / UA159).